The chain runs to 353 residues: Terpene synthase 1 (353 aa).

A DDxx(x)D/E motif motif is present at residues 81-86 (DDAIDA). The NDxxSxxxD/E motif motif lies at 222 to 230 (NDLVSYEKE).

The protein belongs to the terpene synthase family.

The catalysed reaction is (2E,6E)-farnesyl diphosphate = (2S,3R,6S,9S)-(-)-protoillud-7-ene + diphosphate. In terms of biological role, terpene synthase that converts its substrate farnesyl diphosphate (FPP) into the sesquiterpene protoillud-7-ene. In Tieghemostelium lacteum (Slime mold), this protein is Terpene synthase 1.